Reading from the N-terminus, the 334-residue chain is Protein RecA (334 aa).

G65 to T72 provides a ligand contact to ATP.

The protein belongs to the RecA family.

It is found in the cytoplasm. In terms of biological role, can catalyze the hydrolysis of ATP in the presence of single-stranded DNA, the ATP-dependent uptake of single-stranded DNA by duplex DNA, and the ATP-dependent hybridization of homologous single-stranded DNAs. It interacts with LexA causing its activation and leading to its autocatalytic cleavage. In Ureaplasma parvum serovar 3 (strain ATCC 27815 / 27 / NCTC 11736), this protein is Protein RecA.